The sequence spans 407 residues: Cation efflux system protein CusB (407 aa).

The first 28 residues, 1–28 (MKKIALIIGSMIAGGIISAAGFTWFAKA), serve as a signal peptide directing secretion.

It belongs to the membrane fusion protein (MFP) (TC 8.A.1) family. As to quaternary structure, the cus efflux system is composed of CusA, CusB, CusC and CusF.

Its function is as follows. Part of a cation efflux system that mediates resistance to copper and silver. This chain is Cation efflux system protein CusB (cusB), found in Escherichia coli O157:H7.